We begin with the raw amino-acid sequence, 928 residues long: Probable outer membrane protein pmp10 (928 aa).

The signal sequence occupies residues 1–25; sequence MKSQFSWLVLSSTLACFTSCSTVFA. An Autotransporter domain is found at 635-928; it reads TLCSDRGFWA…NVDLGGKFQF (294 aa).

The protein belongs to the PMP outer membrane protein family.

The protein resides in the secreted. Its subcellular location is the cell wall. It localises to the cell outer membrane. This Chlamydia pneumoniae (Chlamydophila pneumoniae) protein is Probable outer membrane protein pmp10 (pmp10).